The sequence spans 153 residues: Pheromone-binding protein Gp-9 (153 aa).

A signal peptide spans 1–19 (MKTLILHICIFALVAFASA). 3 cysteine pairs are disulfide-bonded: C37-C77, C73-C129, and C118-C138.

The protein belongs to the PBP/GOBP family. Homodimer.

The protein resides in the secreted. In terms of biological role, colony queen number, a major feature of social organization, is associated with worker genotype for Gp-9. Colonies are headed by either a single reproductive queen (monogyne form) or multiple queens (polygyne form). Differences in worker Gp-9 genotypes between social forms may cause differences in workers' abilities to recognize queens and regulate their numbers. The chain is Pheromone-binding protein Gp-9 from Solenopsis nigella gensterblumi (Fire ant).